A 269-amino-acid polypeptide reads, in one-letter code: Hemin import ATP-binding protein HmuV (269 aa).

Positions 5-242 (IETHSVTMRI…GLIRKVFEVC (238 aa)) constitute an ABC transporter domain. 37–44 (GPNGAGKS) lines the ATP pocket.

Belongs to the ABC transporter superfamily. Heme (hemin) importer (TC 3.A.1.14.5) family. The complex is composed of two ATP-binding proteins (HmuV), two transmembrane proteins (HmuU) and a solute-binding protein (HmuT).

The protein resides in the cell inner membrane. Its function is as follows. Part of the ABC transporter complex HmuTUV involved in hemin import. Responsible for energy coupling to the transport system. The sequence is that of Hemin import ATP-binding protein HmuV from Nitrobacter winogradskyi (strain ATCC 25391 / DSM 10237 / CIP 104748 / NCIMB 11846 / Nb-255).